Reading from the N-terminus, the 437-residue chain is Proline--tRNA ligase (437 aa).

It belongs to the class-II aminoacyl-tRNA synthetase family. ProS type 2 subfamily. Homodimer.

The protein resides in the cytoplasm. The catalysed reaction is tRNA(Pro) + L-proline + ATP = L-prolyl-tRNA(Pro) + AMP + diphosphate. Functionally, catalyzes the attachment of proline to tRNA(Pro) in a two-step reaction: proline is first activated by ATP to form Pro-AMP and then transferred to the acceptor end of tRNA(Pro). In Rhizorhabdus wittichii (strain DSM 6014 / CCUG 31198 / JCM 15750 / NBRC 105917 / EY 4224 / RW1) (Sphingomonas wittichii), this protein is Proline--tRNA ligase.